Consider the following 495-residue polypeptide: Lysine--tRNA ligase (495 aa).

The Mg(2+) site is built by Glu406 and Glu413.

The protein belongs to the class-II aminoacyl-tRNA synthetase family. As to quaternary structure, homodimer. The cofactor is Mg(2+).

It is found in the cytoplasm. It catalyses the reaction tRNA(Lys) + L-lysine + ATP = L-lysyl-tRNA(Lys) + AMP + diphosphate. The protein is Lysine--tRNA ligase of Staphylococcus aureus (strain COL).